Here is a 418-residue protein sequence, read N- to C-terminus: Tektin-1 (418 aa).

Coiled coils occupy residues 20 to 107 (NKSQ…SYKE), 134 to 177 (QELQ…DLKD), 266 to 308 (NGLK…QQEG), and 332 to 383 (VAQY…ENTI).

This sequence belongs to the tektin family. In terms of assembly, microtubule inner protein component of sperm flagellar doublet microtubules. In terms of processing, ubiquitinated, leading to its degradation. Deubiquitinated by USP16, promoting its stability. As to expression, predominantly expressed in testis.

Its subcellular location is the cytoplasm. It localises to the cytoskeleton. The protein localises to the cilium axoneme. The protein resides in the flagellum axoneme. Microtubule inner protein (MIP) part of the dynein-decorated doublet microtubules (DMTs) in cilia and flagellar axoneme. Forms filamentous polymers in the walls of ciliary and flagellar microtubules. The protein is Tektin-1 (Tekt1) of Rattus norvegicus (Rat).